Reading from the N-terminus, the 277-residue chain is NADPH-dependent 7-cyano-7-deazaguanine reductase (277 aa).

A substrate-binding site is contributed by 83–85 (IES). 85–86 (SK) serves as a coordination point for NADPH. Cys184 (thioimide intermediate) is an active-site residue. Asp191 (proton donor) is an active-site residue. 223–224 (HE) is a substrate binding site. NADPH is bound at residue 252–253 (RG).

This sequence belongs to the GTP cyclohydrolase I family. QueF type 2 subfamily. In terms of assembly, homodimer.

It is found in the cytoplasm. It catalyses the reaction 7-aminomethyl-7-carbaguanine + 2 NADP(+) = 7-cyano-7-deazaguanine + 2 NADPH + 3 H(+). It participates in tRNA modification; tRNA-queuosine biosynthesis. Functionally, catalyzes the NADPH-dependent reduction of 7-cyano-7-deazaguanine (preQ0) to 7-aminomethyl-7-deazaguanine (preQ1). In Cupriavidus pinatubonensis (strain JMP 134 / LMG 1197) (Cupriavidus necator (strain JMP 134)), this protein is NADPH-dependent 7-cyano-7-deazaguanine reductase.